Reading from the N-terminus, the 100-residue chain is Urease subunit gamma (100 aa).

This sequence belongs to the urease gamma subunit family. As to quaternary structure, heterotrimer of UreA (gamma), UreB (beta) and UreC (alpha) subunits. Three heterotrimers associate to form the active enzyme.

It is found in the cytoplasm. The enzyme catalyses urea + 2 H2O + H(+) = hydrogencarbonate + 2 NH4(+). It functions in the pathway nitrogen metabolism; urea degradation; CO(2) and NH(3) from urea (urease route): step 1/1. The sequence is that of Urease subunit gamma from Verminephrobacter eiseniae (strain EF01-2).